A 719-amino-acid chain; its full sequence is Polyribonucleotide nucleotidyltransferase (719 aa).

Positions 507 and 513 each coordinate Mg(2+). In terms of domain architecture, KH spans 573-633 (PKLELFSVDP…EQIKAAKDYI (61 aa)). An S1 motif domain is found at 658 to 719 (GQEFQGIVKK…NGKISVDLCE (62 aa)).

The protein belongs to the polyribonucleotide nucleotidyltransferase family. Requires Mg(2+) as cofactor.

The protein localises to the cytoplasm. It carries out the reaction RNA(n+1) + phosphate = RNA(n) + a ribonucleoside 5'-diphosphate. Its function is as follows. Involved in mRNA degradation. Catalyzes the phosphorolysis of single-stranded polyribonucleotides processively in the 3'- to 5'-direction. The protein is Polyribonucleotide nucleotidyltransferase of Campylobacter jejuni (strain RM1221).